The chain runs to 595 residues: Laccase-18 (595 aa).

A signal peptide spans 1-29 (MEKLSTAASLFCVVVAATALAMAVVGGEA). 2 consecutive Plastocyanin-like domains span residues 37-153 (MVHE…PRNG) and 162-316 (KDVP…YAGA). N-linked (GlcNAc...) asparagine glycosylation is found at Asn42 and Asn48. 2 residues coordinate Cu cation: His87 and His89. Asn121 is a glycosylation site (N-linked (GlcNAc...) asparagine). Cu cation contacts are provided by His132 and His134. Residues Asn206, Asn345, Asn382, Asn402, Asn409, Asn439, and Asn470 are each glycosylated (N-linked (GlcNAc...) asparagine). Positions 429–571 (DFPVRPPRPF…ATAFIVEDGP (143 aa)) constitute a Plastocyanin-like 3 domain. Residues Asn488, His491, His493, His550, Cys551, His552, His556, and Met561 each coordinate Cu cation. Residues 570–595 (GPTPETSLPPPPPEFKRCGTNGLSQP) are disordered.

This sequence belongs to the multicopper oxidase family. Requires Cu cation as cofactor.

The protein localises to the secreted. The protein resides in the extracellular space. It is found in the apoplast. It catalyses the reaction 4 hydroquinone + O2 = 4 benzosemiquinone + 2 H2O. Functionally, lignin degradation and detoxification of lignin-derived products. The polypeptide is Laccase-18 (LAC18) (Oryza sativa subsp. japonica (Rice)).